Reading from the N-terminus, the 220-residue chain is Deoxyribose-phosphate aldolase (220 aa).

Residue Asp89 is the Proton donor/acceptor of the active site. The active-site Schiff-base intermediate with acetaldehyde is Lys151. Lys180 acts as the Proton donor/acceptor in catalysis.

This sequence belongs to the DeoC/FbaB aldolase family. DeoC type 1 subfamily.

It is found in the cytoplasm. It catalyses the reaction 2-deoxy-D-ribose 5-phosphate = D-glyceraldehyde 3-phosphate + acetaldehyde. It functions in the pathway carbohydrate degradation; 2-deoxy-D-ribose 1-phosphate degradation; D-glyceraldehyde 3-phosphate and acetaldehyde from 2-deoxy-alpha-D-ribose 1-phosphate: step 2/2. In terms of biological role, catalyzes a reversible aldol reaction between acetaldehyde and D-glyceraldehyde 3-phosphate to generate 2-deoxy-D-ribose 5-phosphate. This chain is Deoxyribose-phosphate aldolase, found in Streptococcus uberis (strain ATCC BAA-854 / 0140J).